A 196-amino-acid chain; its full sequence is Oocyte zinc finger protein XlCOF26 (196 aa).

7 consecutive C2H2-type zinc fingers follow at residues 6 to 28 (YSCT…QKNH), 34 to 56 (FTCT…QRIH), 62 to 84 (FTCT…QRIH), 90 to 112 (FTCT…HKIH), 118 to 140 (FTCP…QRTH), 146 to 168 (FTCT…QSTH), and 174 to 196 (FTCT…QMTH).

The protein belongs to the krueppel C2H2-type zinc-finger protein family.

It is found in the nucleus. Its function is as follows. May be involved in transcriptional regulation. In Xenopus laevis (African clawed frog), this protein is Oocyte zinc finger protein XlCOF26.